Here is a 73-residue protein sequence, read N- to C-terminus: Large ribosomal subunit protein uL29 (73 aa).

This sequence belongs to the universal ribosomal protein uL29 family.

The sequence is that of Large ribosomal subunit protein uL29 (rpl29) from Saccharolobus solfataricus (strain ATCC 35092 / DSM 1617 / JCM 11322 / P2) (Sulfolobus solfataricus).